Here is a 1022-residue protein sequence, read N- to C-terminus: Antigenic heat-stable 120 kDa protein (1022 aa).

Disordered stretches follow at residues 1 to 41 (MSKD…QTTT) and 355 to 403 (GQSK…PQSQ). A compositionally biased stretch (basic and acidic residues) spans 19-34 (EYTEEQKQTLEQEQKE). Polar residues-rich tracts occupy residues 355-380 (GQSKEQPLITPQQTTSSSVEPPQYKQ) and 387-403 (PTNQPLQPETSQMPQSQ).

It is found in the cytoplasm. This Rickettsia conorii (strain ATCC VR-613 / Malish 7) protein is Antigenic heat-stable 120 kDa protein (sca4).